The chain runs to 118 residues: MATTASPQALAHGRFVRGSVSKVRRVLDQIRGRSYRDALIMLEFMPYRSTGPITKVLRSAVANAEHNMGLDPSNLVVSMASADMGPTMKRYRPRAQGRAYQIKKQTCHISIGVTPQDA.

The protein belongs to the universal ribosomal protein uL22 family. As to quaternary structure, part of the 50S ribosomal subunit.

This protein binds specifically to 23S rRNA; its binding is stimulated by other ribosomal proteins, e.g. L4, L17, and L20. It is important during the early stages of 50S assembly. It makes multiple contacts with different domains of the 23S rRNA in the assembled 50S subunit and ribosome. Its function is as follows. The globular domain of the protein is located near the polypeptide exit tunnel on the outside of the subunit, while an extended beta-hairpin is found that lines the wall of the exit tunnel in the center of the 70S ribosome. This Synechococcus sp. (strain RCC307) protein is Large ribosomal subunit protein uL22.